The sequence spans 189 residues: MSRIGKLPISIPAGVTVTLKDDVVTVKGPKGELSQYVNPAINVAIEDGHITLTENENAMLDNPKQKHAFHGLYRSLVHNMVVGVSEGYKKELELVGVGYRASNQGNIIELALGYTHNIFIQLPPEVKVETKSERNKNPLILLESCDKQLLGQVCSKIRSFRKPEPYKGKGIKFVGEEIRRKSGKSAGAK.

This sequence belongs to the universal ribosomal protein uL6 family. Part of the 50S ribosomal subunit.

Functionally, this protein binds to the 23S rRNA, and is important in its secondary structure. It is located near the subunit interface in the base of the L7/L12 stalk, and near the tRNA binding site of the peptidyltransferase center. The chain is Large ribosomal subunit protein uL6 from Bacteroides fragilis (strain ATCC 25285 / DSM 2151 / CCUG 4856 / JCM 11019 / LMG 10263 / NCTC 9343 / Onslow / VPI 2553 / EN-2).